The sequence spans 661 residues: DNA-directed RNA polymerase subunit beta' (661 aa).

Zn(2+) is bound by residues Cys69, Cys71, Cys87, and Cys90. Mg(2+)-binding residues include Asp489, Asp491, and Asp493.

It belongs to the RNA polymerase beta' chain family. RpoC1 subfamily. As to quaternary structure, in plastids the minimal PEP RNA polymerase catalytic core is composed of four subunits: alpha, beta, beta', and beta''. When a (nuclear-encoded) sigma factor is associated with the core the holoenzyme is formed, which can initiate transcription. Mg(2+) is required as a cofactor. It depends on Zn(2+) as a cofactor.

It is found in the plastid. Its subcellular location is the chloroplast. The catalysed reaction is RNA(n) + a ribonucleoside 5'-triphosphate = RNA(n+1) + diphosphate. Its function is as follows. DNA-dependent RNA polymerase catalyzes the transcription of DNA into RNA using the four ribonucleoside triphosphates as substrates. In Chaetosphaeridium globosum (Charophycean green alga), this protein is DNA-directed RNA polymerase subunit beta'.